The primary structure comprises 537 residues: CTP synthase (537 aa).

The tract at residues 1-267 is amidoligase domain; the sequence is MTKYIFVTGG…DQIVCDHLKL (267 aa). CTP is bound at residue Ser13. Ser13 contributes to the UTP binding site. Position 14 to 19 (14 to 19) interacts with ATP; the sequence is SIGKGI. Tyr54 is a binding site for L-glutamine. An ATP-binding site is contributed by Asp71. Residues Asp71 and Glu141 each coordinate Mg(2+). CTP contacts are provided by residues 148-150, 188-193, and Lys224; these read DIE and KTKPTQ. UTP-binding positions include 188–193 and Lys224; that span reads KTKPTQ. 240 to 242 lines the ATP pocket; that stretch reads RDV. Positions 292-535 constitute a Glutamine amidotransferase type-1 domain; sequence RIALVGKYVE…VTAAVKNKNQ (244 aa). Gly354 provides a ligand contact to L-glutamine. Cys381 functions as the Nucleophile; for glutamine hydrolysis in the catalytic mechanism. L-glutamine contacts are provided by residues 382-385, Glu405, and Arg463; that span reads LGMQ. Catalysis depends on residues His508 and Glu510.

Belongs to the CTP synthase family. In terms of assembly, homotetramer.

The catalysed reaction is UTP + L-glutamine + ATP + H2O = CTP + L-glutamate + ADP + phosphate + 2 H(+). The enzyme catalyses L-glutamine + H2O = L-glutamate + NH4(+). It catalyses the reaction UTP + NH4(+) + ATP = CTP + ADP + phosphate + 2 H(+). Its pathway is pyrimidine metabolism; CTP biosynthesis via de novo pathway; CTP from UDP: step 2/2. Its activity is regulated as follows. Allosterically activated by GTP, when glutamine is the substrate; GTP has no effect on the reaction when ammonia is the substrate. The allosteric effector GTP functions by stabilizing the protein conformation that binds the tetrahedral intermediate(s) formed during glutamine hydrolysis. Inhibited by the product CTP, via allosteric rather than competitive inhibition. Functionally, catalyzes the ATP-dependent amination of UTP to CTP with either L-glutamine or ammonia as the source of nitrogen. Regulates intracellular CTP levels through interactions with the four ribonucleotide triphosphates. The chain is CTP synthase from Streptococcus equi subsp. equi (strain 4047).